The primary structure comprises 180 residues: Crossover junction endodeoxyribonuclease RuvC (180 aa).

Catalysis depends on residues Asp9, Glu74, and Asp146. Mg(2+) is bound by residues Asp9, Glu74, and Asp146.

It belongs to the RuvC family. Homodimer which binds Holliday junction (HJ) DNA. The HJ becomes 2-fold symmetrical on binding to RuvC with unstacked arms; it has a different conformation from HJ DNA in complex with RuvA. In the full resolvosome a probable DNA-RuvA(4)-RuvB(12)-RuvC(2) complex forms which resolves the HJ. The cofactor is Mg(2+).

It is found in the cytoplasm. It catalyses the reaction Endonucleolytic cleavage at a junction such as a reciprocal single-stranded crossover between two homologous DNA duplexes (Holliday junction).. In terms of biological role, the RuvA-RuvB-RuvC complex processes Holliday junction (HJ) DNA during genetic recombination and DNA repair. Endonuclease that resolves HJ intermediates. Cleaves cruciform DNA by making single-stranded nicks across the HJ at symmetrical positions within the homologous arms, yielding a 5'-phosphate and a 3'-hydroxyl group; requires a central core of homology in the junction. The consensus cleavage sequence is 5'-(A/T)TT(C/G)-3'. Cleavage occurs on the 3'-side of the TT dinucleotide at the point of strand exchange. HJ branch migration catalyzed by RuvA-RuvB allows RuvC to scan DNA until it finds its consensus sequence, where it cleaves and resolves the cruciform DNA. This is Crossover junction endodeoxyribonuclease RuvC from Methylobacillus flagellatus (strain ATCC 51484 / DSM 6875 / VKM B-1610 / KT).